The sequence spans 394 residues: QWRF motif-containing protein 7 (394 aa).

Residues 1-171 form a disordered region; sequence MATTGRRLRP…ESPVSKAKIR (171 aa). Over residues 14-67 the composition is skewed to low complexity; it reads NNNRSRTISSSISLPVSLNASLSSSTSSSSSSSPSNSSKRVMITRSQSTTRSSR. Residues 85–96 show a composition bias toward polar residues; sequence NSASRSQEINNG. Residues 97–110 show a composition bias toward basic and acidic residues; sequence RSRESFARYLEQRT. Composition is skewed to polar residues over residues 111 to 120 and 142 to 157; these read RGSPRSNASS and TMKT…TSMC. A QWRF motif motif is present at residues 211-214; that stretch reads QWRF.

Belongs to the QWRF family.

The chain is QWRF motif-containing protein 7 (QWRF7) from Arabidopsis thaliana (Mouse-ear cress).